Reading from the N-terminus, the 422-residue chain is L-2-hydroxyglutarate dehydrogenase (422 aa).

This sequence belongs to the L2HGDH family. The cofactor is FAD.

The protein localises to the cell inner membrane. The enzyme catalyses (S)-2-hydroxyglutarate + a quinone = a quinol + 2-oxoglutarate. The protein operates within amino-acid degradation. Its function is as follows. Catalyzes the dehydrogenation of L-2-hydroxyglutarate (L2HG) to alpha-ketoglutarate and couples to the respiratory chain by feeding electrons from the reaction into the membrane quinone pool. Functions in a L-lysine degradation pathway that proceeds via cadaverine, glutarate and L-2-hydroxyglutarate. Also displays some oxidase activity in vitro on L-2-hydroxyglutarate with O2 as the electron acceptor, but this activity is most likely not physiological. The chain is L-2-hydroxyglutarate dehydrogenase from Salmonella houtenae.